A 305-amino-acid chain; its full sequence is tRNA pseudouridine synthase B (305 aa).

Residue Asp39 is the Nucleophile of the active site.

This sequence belongs to the pseudouridine synthase TruB family. Type 1 subfamily.

The enzyme catalyses uridine(55) in tRNA = pseudouridine(55) in tRNA. Responsible for synthesis of pseudouridine from uracil-55 in the psi GC loop of transfer RNAs. In Staphylococcus aureus (strain bovine RF122 / ET3-1), this protein is tRNA pseudouridine synthase B.